The chain runs to 143 residues: Periplasmic nitrate reductase, electron transfer subunit (143 aa).

A signal peptide spans 1-22; that stretch reads MKKILTLAAIVLAIGGCSGQQA. His-72, Cys-85, Cys-88, His-89, His-106, Cys-121, Cys-124, and His-125 together coordinate heme c.

This sequence belongs to the NapB family. As to quaternary structure, component of the periplasmic nitrate reductase NapAB complex composed of NapA and NapB. Binds 2 heme C groups per subunit.

The protein resides in the periplasm. Electron transfer subunit of the periplasmic nitrate reductase complex NapAB. Receives electrons from the membrane-anchored tetraheme c-type CymA protein and transfers these to NapA subunit, thus allowing electron flow between membrane and periplasm. Not essential for nitrate reduction but confers advantage to the organism when grown on nitrate and thereby a fitness gain in utilizing nitrate. This is Periplasmic nitrate reductase, electron transfer subunit from Shewanella oneidensis (strain ATCC 700550 / JCM 31522 / CIP 106686 / LMG 19005 / NCIMB 14063 / MR-1).